The chain runs to 96 residues: Large ribosomal subunit protein bL28 (96 aa).

The protein belongs to the bacterial ribosomal protein bL28 family.

This chain is Large ribosomal subunit protein bL28, found in Agrobacterium fabrum (strain C58 / ATCC 33970) (Agrobacterium tumefaciens (strain C58)).